A 272-amino-acid chain; its full sequence is MWPLWLLASLLALSQALPFEQKAFWDFTLDDGLPMLNDEEASGADSTSGIPDLDALPPTFSAMCPFGCHCHLRVVQCSDLGLKAVPKEISPDTTLLDLQNNDISELRKDDFKGLQHLYALVLVNNKISRSTRRPSAPDGLKLNYLRISEAKLTGIPKDLPETLNELHLDHNKIQAIELEDLLRYSKLYRLGLGHNQIRMIENGSLSFLPTLRELHLDNNKLSRVPAGLPDLKLLQVVYLHTNNITKVGVNDFCPVGFGVKRAYYNGISLFNN.

Positions 1–16 (MWPLWLLASLLALSQA) are cleaved as a signal peptide. A propeptide spanning residues 17 to 37 (LPFEQKAFWDFTLDDGLPMLN) is cleaved from the precursor. 2 O-linked (Xyl...) (glycosaminoglycan) serine glycosylation sites follow: S42 and S48. The region spanning 55–91 (ALPPTFSAMCPFGCHCHLRVVQCSDLGLKAVPKEISP) is the LRRNT domain. 2 disulfide bridges follow: C64-C70 and C68-C77. LRR repeat units lie at residues 92–113 (DTTL…DFKG), 116–137 (HLYA…PSAP), 138–161 (DGLK…DLPE), 162–183 (TLNE…DLLR), 186–209 (KLYR…SFLP), 210–232 (TLRE…PDLK), 233–254 (LLQV…DFCP), and 255–272 (VGFG…LFNN).

This sequence belongs to the small leucine-rich proteoglycan (SLRP) family. SLRP class I subfamily. In terms of assembly, homodimer. Forms a ternary complex with MFAP2 and ELN. Post-translationally, the two attached glycosaminoglycan chains can be either chondroitin sulfate or dermatan sulfate. Found in several connective tissues, especially in articular cartilages.

It is found in the secreted. Its subcellular location is the extracellular space. It localises to the extracellular matrix. May be involved in collagen fiber assembly. In Sus scrofa (Pig), this protein is Biglycan (BGN).